A 707-amino-acid polypeptide reads, in one-letter code: Dendrin (707 aa).

5 disordered regions span residues 1 to 22 (MLDG…DEES), 67 to 86 (QNRT…RRPW), 94 to 195 (ATNW…PWGG), 213 to 273 (AGTA…KKRL), and 342 to 377 (TEVA…GSEE). Residues 103–134 (AEVRAREQEKRKAASQEREAKETERKRRKAGG) are a coiled coil. The segment covering 105–127 (VRAREQEKRKAASQEREAKETER) has biased composition (basic and acidic residues). Residues 113–131 (RKAASQEREAKETERKRRK) are nuclear localization. The interaction with MAGI2 stretch occupies residues 186–236 (GVAWAGPWGGRRPGPPSYEAHLLLRGAAGTAPRRRWDRPPPYVAPPSYEGP). Residues 340 to 434 (PVTEVALSGS…LEVWKVTRRA (95 aa)) form an interaction with ACTN1 region. A compositionally biased stretch (basic residues) spans 359–369 (PRSRQHLRGSR). S387 carries the post-translational modification Phosphoserine. Disordered stretches follow at residues 389-421 (KKPP…EGTE) and 517-707 (RVLN…GKRE). Positions 406–707 (GGTGWKESLG…TRKTPQGKRE (302 aa)) are interaction with CD2AP and NPHS1. 2 stretches are compositionally biased toward basic and acidic residues: residues 524–544 (EGRE…EERS) and 692–707 (GLVR…GKRE).

In terms of assembly, forms a ternary complex with MAGI2 and SH3KBP1; recruits DDN to the cytoplasm. Interacts with MAGI1. Interacts with ACTN1 and may interact with WWC1. Interacts with the podocyte slit diaphragm proteins CD2AP, NPHS1 and NPHS2; the interaction with CD2AP and NPHS1 is direct. Specifically expressed in forebrain structures, particularly in neocortex, olfactory bulb, hippocampus, caudate-putamen, and limbic system (at protein level). Also detected in spleen, liver, kidney and placenta (at protein level).

Its subcellular location is the cell projection. The protein resides in the dendritic spine membrane. It is found in the cytoplasm. The protein localises to the endoplasmic reticulum membrane. It localises to the perikaryon. Its subcellular location is the nucleus. Functionally, promotes apoptosis of kidney glomerular podocytes. Podocytes are highly specialized cells essential to the ultrafiltration of blood, resulting in the extraction of urine and the retention of protein. The protein is Dendrin (Ddn) of Rattus norvegicus (Rat).